Here is a 105-residue protein sequence, read N- to C-terminus: MADTKVDTSKEVSAKDLKEKKQVEEAENGKDAPANGNAENEENGDQENEVDEEDDDVAEEDEEDDGEGDDDDEDEEAEGGTGKRAAEDDDDDEDDVDPKKQKTDV.

Basic and acidic residues predominate over residues 1–30; it reads MADTKVDTSKEVSAKDLKEKKQVEEAENGK. The tract at residues 1–105 is disordered; sequence MADTKVDTSK…VDPKKQKTDV (105 aa). 2 stretches are compositionally biased toward acidic residues: residues 39 to 78 and 87 to 96; these read ENEENGDQENEVDEEDDDVAEEDEEDDGEGDDDDEDEEAE and EDDDDDEDDV.

This sequence belongs to the pro/parathymosin family. In terms of tissue distribution, at the 20-somite stage (18 hpf), expressed on the dorsal side of the embryo in the developing central and peripheral nervous system (CNS and PNS), in the tail bud and the pronephric ducts. In the PNS, expressed in the otic vesicle, trigeminal ganglion and the anterior lateral line placode. Localized throughout the hindbrain, with highest expression in rhombomeres 3 and 4. In the head, expressed in the olfactory placode and in the diencephalic region. At the end of the segmentation period (20 hpf), expression begins in the newly forming endodermal pouches, and weakly in the pharyngeal arch precursor cells. During the early pharyngula period, expressed in the pectoral fin bud, the developing retina, and still present in the central nervous system and endodermal pouches. In the tail, expressed in the spinal cord and posterior lateral line precursors. Weakly expressed in the pronephric ducts, only in the corpuscles of Stanius. At 48 hpf, still expressed in the retina and brain, where expression is almost uniform. At this stage, expression is decreased in the spinal cord and is absent from the lateral line cells and pronephric ducts, but appears in the intestine and continues in the pharyngeal arches. In 72 hpf embryos, expression in the brain remains uniform but is restricted to amacrine cells in the retina. In the pharyngeal arches, expression continues to be limited to the ectodermal and endodermal covering cells.

Its subcellular location is the nucleus. The protein is Prothymosin alpha-A (ptmaa) of Danio rerio (Zebrafish).